Here is a 515-residue protein sequence, read N- to C-terminus: Glucose-6-phosphate 1-dehydrogenase 6, cytoplasmic (515 aa).

NADP(+) contacts are provided by residues 38 to 45, arginine 73, tyrosine 155, and lysine 182; that span reads GASGDLAK. Residues lysine 182, 212–216, glutamate 250, and aspartate 269 each bind D-glucose 6-phosphate; that span reads HYLGK. Histidine 274 functions as the Proton acceptor in the catalytic mechanism. Lysine 357 serves as a coordination point for NADP(+). The D-glucose 6-phosphate site is built by lysine 360 and arginine 365. Residues lysine 366, arginine 370, and arginine 394 each contribute to the NADP(+) site. Glutamine 396 contributes to the D-glucose 6-phosphate binding site. NADP(+)-binding positions include 402–404, 422–424, arginine 488, and tryptophan 510; these read YMK and DLS.

It belongs to the glucose-6-phosphate dehydrogenase family. As to quaternary structure, forms homodimer. As to expression, expressed in roots, leaves, stems, buds, flowers and siliques.

It localises to the cytoplasm. It is found in the cytosol. It carries out the reaction D-glucose 6-phosphate + NADP(+) = 6-phospho-D-glucono-1,5-lactone + NADPH + H(+). Its pathway is carbohydrate degradation; pentose phosphate pathway; D-ribulose 5-phosphate from D-glucose 6-phosphate (oxidative stage): step 1/3. Regulated by metabolites. Functionally, catalyzes the rate-limiting step of the oxidative pentose-phosphate pathway, which represents a route for the dissimilation of carbohydrates besides glycolysis. The main function of this enzyme is to provide reducing power (NADPH) and pentose phosphates for fatty acid and nucleic acid synthesis which are involved in membrane synthesis and cell division. The protein is Glucose-6-phosphate 1-dehydrogenase 6, cytoplasmic of Arabidopsis thaliana (Mouse-ear cress).